A 312-amino-acid polypeptide reads, in one-letter code: Olfactory receptor 1D5 (312 aa).

Residues 1 to 25 (MDGDNQSENSQFLLLGISESPEQQQ) lie on the Extracellular side of the membrane. Asn-5 is a glycosylation site (N-linked (GlcNAc...) asparagine). Residues 26-49 (ILFWMFLSMYLVTVLGNVLIILAI) traverse the membrane as a helical segment. The Cytoplasmic portion of the chain corresponds to 50–57 (SSDSRLHT). Residues 58 to 79 (PMYFFLANLSFTDLFFVTNTIP) form a helical membrane-spanning segment. Topologically, residues 80–100 (KMLVNLQSQNKAISYAGCLTQ) are extracellular. A disulfide bridge connects residues Cys-97 and Cys-189. Residues 101–120 (LYFLVSLVTLDNLILAVMAY) form a helical membrane-spanning segment. The Cytoplasmic segment spans residues 121 to 140 (DRYVAICCPLHYVTAMSPGL). A helical membrane pass occupies residues 141–158 (CVLLLSLCWGLSVFYGLL). Topologically, residues 159 to 196 (LTLLLTRVTFCGPREIHYLFCDMYILLRLACSNTHIIH) are extracellular. Residues 197-220 (TVLVATGCFIFLTPLGFMTTSYVR) form a helical membrane-spanning segment. Topologically, residues 221–237 (IVRTILQIPSASKKYKA) are cytoplasmic. Residues 238–260 (FSTCASHLGVVSLFYGTLAMVYL) traverse the membrane as a helical segment. The Extracellular segment spans residues 261-271 (QPLHTYSMKDS). A helical transmembrane segment spans residues 272–291 (VATVMYAVVTPMMNPFIHSL). At 292–312 (RNKDMHGALGRVLRRLFQRPK) the chain is on the cytoplasmic side.

This sequence belongs to the G-protein coupled receptor 1 family.

The protein localises to the cell membrane. Functionally, odorant receptor. The sequence is that of Olfactory receptor 1D5 (OR1D5) from Pan troglodytes (Chimpanzee).